The chain runs to 250 residues: Coproheme decarboxylase (250 aa).

Fe-coproporphyrin III contacts are provided by residues Arg-131, 145 to 149 (YPMNK), His-172, and Gln-185. Residue Tyr-145 is part of the active site.

The protein belongs to the ChdC family. Type 1 subfamily. It depends on Fe-coproporphyrin III as a cofactor.

It catalyses the reaction Fe-coproporphyrin III + 2 H2O2 + 2 H(+) = heme b + 2 CO2 + 4 H2O. It carries out the reaction Fe-coproporphyrin III + H2O2 + H(+) = harderoheme III + CO2 + 2 H2O. The enzyme catalyses harderoheme III + H2O2 + H(+) = heme b + CO2 + 2 H2O. Its pathway is porphyrin-containing compound metabolism; protoheme biosynthesis. Functionally, involved in coproporphyrin-dependent heme b biosynthesis. Catalyzes the decarboxylation of Fe-coproporphyrin III (coproheme) to heme b (protoheme IX), the last step of the pathway. The reaction occurs in a stepwise manner with a three-propionate intermediate. The polypeptide is Coproheme decarboxylase (Staphylococcus aureus (strain MSSA476)).